Here is a 547-residue protein sequence, read N- to C-terminus: Chaperonin GroEL 1 (547 aa).

Residues 29–32 (TLGP), 86–90 (DGTTT), G418, 482–484 (NAA), and D498 contribute to the ATP site.

The protein belongs to the chaperonin (HSP60) family. In terms of assembly, forms a cylinder of 14 subunits composed of two heptameric rings stacked back-to-back. Interacts with the co-chaperonin GroES.

Its subcellular location is the cytoplasm. It carries out the reaction ATP + H2O + a folded polypeptide = ADP + phosphate + an unfolded polypeptide.. Together with its co-chaperonin GroES, plays an essential role in assisting protein folding. The GroEL-GroES system forms a nano-cage that allows encapsulation of the non-native substrate proteins and provides a physical environment optimized to promote and accelerate protein folding. In Corynebacterium jeikeium (strain K411), this protein is Chaperonin GroEL 1.